The primary structure comprises 289 residues: Testis-expressed protein 26 (289 aa).

The tract at residues 1–26 is disordered; sequence MEQPGPRAPDPSLCHHNLQPTDDPNW. Mn stretches follow at residues 30–42, 69–83, 144–157, 179–193, and 233–247; these read ATTMRTAFTPKTG, QTQYSDEYTWKSHSK, ISLTKRDFVDRSKA, DTEFRRNYQIPAKIP, and QTTYQSDYDKTYPDF.

This chain is Testis-expressed protein 26 (TEX26), found in Homo sapiens (Human).